The chain runs to 93 residues: UPF0213 protein CPE1444 (93 aa).

One can recognise a GIY-YIG domain in the interval 1–75 (MNYVYILKCK…KKLTRNQKLQ (75 aa)).

The protein belongs to the UPF0213 family.

The sequence is that of UPF0213 protein CPE1444 from Clostridium perfringens (strain 13 / Type A).